Here is a 456-residue protein sequence, read N- to C-terminus: Enolase (456 aa).

Q164 contacts (2R)-2-phosphoglycerate. E207 functions as the Proton donor in the catalytic mechanism. 3 residues coordinate Mg(2+): D244, E287, and D314. (2R)-2-phosphoglycerate-binding residues include K339, R368, S369, and K390. Residue K339 is the Proton acceptor of the active site.

This sequence belongs to the enolase family. Component of the RNA degradosome, a multiprotein complex involved in RNA processing and mRNA degradation. Requires Mg(2+) as cofactor.

Its subcellular location is the cytoplasm. It localises to the secreted. The protein resides in the cell surface. It carries out the reaction (2R)-2-phosphoglycerate = phosphoenolpyruvate + H2O. It functions in the pathway carbohydrate degradation; glycolysis; pyruvate from D-glyceraldehyde 3-phosphate: step 4/5. Catalyzes the reversible conversion of 2-phosphoglycerate (2-PG) into phosphoenolpyruvate (PEP). It is essential for the degradation of carbohydrates via glycolysis. This chain is Enolase, found in Francisella tularensis subsp. holarctica (strain OSU18).